Reading from the N-terminus, the 374-residue chain is Pectate lyase 2 (374 aa).

A signal peptide spans 1–22; the sequence is MKYLLPTAAAGLLLLAAQPAMA. Cys93 and Cys176 form a disulfide bridge. Positions 150, 152, 187, and 191 each coordinate Ca(2+). The active site involves Arg239. Cys350 and Cys373 are joined by a disulfide.

It belongs to the polysaccharide lyase 1 family. PLADES subfamily. It depends on Ca(2+) as a cofactor.

The protein localises to the secreted. It catalyses the reaction Eliminative cleavage of (1-&gt;4)-alpha-D-galacturonan to give oligosaccharides with 4-deoxy-alpha-D-galact-4-enuronosyl groups at their non-reducing ends.. The protein operates within glycan metabolism; pectin degradation; 2-dehydro-3-deoxy-D-gluconate from pectin: step 2/5. Functionally, involved in maceration and soft-rotting of plant tissue. This is Pectate lyase 2 (pel2) from Pectobacterium carotovorum (Erwinia carotovora).